A 192-amino-acid chain; its full sequence is MKRLEVSNQAKLPTQFGEFYIQCFREKGSNGSKDHLVVFTPNFSQNPLVRLHSECLTGDALGSQKCDCGGALQMALERISKEGGLVIYLRQEGRGIGLFNKVNAYALQDKGYDTIQANEMIGFKDDERDYSVAGEILEYYRIKKMRLLTNNPKKIAALEKYAEVTRESLIVCANEHNQGYLEVKKLKMGHLL.

50–54 (RLHSE) is a GTP binding site. Zn(2+)-binding residues include cysteine 55, cysteine 66, and cysteine 68. Residues 92–94 (EGR) and threonine 114 each bind GTP. The active-site Proton acceptor is the aspartate 126. The active-site Nucleophile is arginine 128. Residues threonine 149 and lysine 154 each coordinate GTP.

Belongs to the GTP cyclohydrolase II family. Zn(2+) is required as a cofactor.

It catalyses the reaction GTP + 4 H2O = 2,5-diamino-6-hydroxy-4-(5-phosphoribosylamino)-pyrimidine + formate + 2 phosphate + 3 H(+). Its pathway is cofactor biosynthesis; riboflavin biosynthesis; 5-amino-6-(D-ribitylamino)uracil from GTP: step 1/4. Catalyzes the conversion of GTP to 2,5-diamino-6-ribosylamino-4(3H)-pyrimidinone 5'-phosphate (DARP), formate and pyrophosphate. The protein is GTP cyclohydrolase-2 of Helicobacter pylori (strain P12).